Here is a 329-residue protein sequence, read N- to C-terminus: MISPVPSIPRSAHRQRPEATPYVDLTRPEWSALRDKTPLPLTAEEVEKLRGLGDVIDLDEVRDIYLPLSRLLNLYVGATDGLRGALNTFLGEQGSQSGTPFVIGVAGSVAVGKSTVARLLQALLSRWPEHPRVELVTTDGFLLPTRELEARGLMSRKGFPESYDRRALTRFVADIKAGKAEVTAPVYSHLIYDIVPDQRLVVRRPDILIVEGLNVLQPALPGKDGRTRVGLADYFDFSVYVDARTEDIERWYLNRFRKLRATAFQNPSSYFRKYTQVSEEEALDYARTTWRTINKPNLVENVAPTRGRATLVLRKGPDHKVQRLSLRKL.

A disordered region spans residues 1-21 (MISPVPSIPRSAHRQRPEATP). 107 to 114 (GSVAVGKS) serves as a coordination point for ATP.

It belongs to the prokaryotic pantothenate kinase family.

The protein resides in the cytoplasm. The catalysed reaction is (R)-pantothenate + ATP = (R)-4'-phosphopantothenate + ADP + H(+). It participates in cofactor biosynthesis; coenzyme A biosynthesis; CoA from (R)-pantothenate: step 1/5. The chain is Pantothenate kinase (coaA) from Streptomyces coelicolor (strain ATCC BAA-471 / A3(2) / M145).